Reading from the N-terminus, the 141-residue chain is Drosulfakinins (141 aa).

An N-terminal signal peptide occupies residues 1 to 31 (MGLRSCTHLATLFMTLWAVAFCFLVVVPIPA). Residues 32 to 73 (QTTSLQNAKDDRRLQELESKIGAESDQTNANLVGPSFSRFGD) constitute a propeptide that is removed on maturation. A Phenylalanine amide modification is found at Phe82. Residues 86-111 (VPLISRPMIPIELDLLMDNDDERTKA) constitute a propeptide that is removed on maturation. Sulfotyrosine is present on Tyr117. Phe122 carries the post-translational modification Phenylalanine amide. Tyr134 bears the Sulfotyrosine mark. Residue Phe139 is modified to Phenylalanine amide.

Belongs to the gastrin/cholecystokinin family.

The protein localises to the secreted. Drosulfakinin-0 (DSK 0) plays diverse biological roles including regulating gut muscle contraction in adults but not in larvae. The protein is Drosulfakinins of Drosophila simulans (Fruit fly).